The chain runs to 317 residues: TPR repeat-containing thioredoxin TDX (317 aa).

The interval 1–48 is disordered; the sequence is MATAGASSFEDEIMESDIELEGEAVEPDNDPPQKMGDPSVEVSDEKRD. Over residues 9–29 the composition is skewed to acidic residues; sequence FEDEIMESDIELEGEAVEPDN. 3 TPR repeats span residues 50-83, 85-117, and 119-151; these read AQLCKNKGVDAFSEGKLDEAIEHLTEAIVLNPTS, IAYATRAVIFVKSKKPNAAIRDADAALKINPDS, and KGYKSRGMAKAMLGKWEEAAQDLRMAAKLDYDE. In terms of domain architecture, Thioredoxin spans 189 to 316; it reads EKQRKHAEEV…LERKVAQHGS (128 aa). Active-site nucleophile residues include cysteine 242 and cysteine 245. A disulfide bridge connects residues cysteine 242 and cysteine 245.

Belongs to the thioredoxin family.

Probable thiol-disulfide oxidoreductase that may participate in various redox reactions and act as chaperone under heat shock. May interact with HSP70 proteins through the TPR repeats. This Oryza sativa subsp. japonica (Rice) protein is TPR repeat-containing thioredoxin TDX.